A 223-amino-acid chain; its full sequence is N-terminal Xaa-Pro-Lys N-methyltransferase 1 (223 aa).

Methionine 1 carries the post-translational modification N-acetylmethionine. Position 2 is an N-acetylthreonine; in N-terminal Xaa-Pro-Lys N-methyltransferase 1, N-terminally processed (threonine 2). S-adenosyl-L-methionine is bound by residues glycine 69, arginine 74, 91–93 (DVT), 119–120 (LQ), and glutamine 135.

It belongs to the methyltransferase superfamily. NTM1 family.

It is found in the nucleus. The enzyme catalyses N-terminal L-alanyl-L-prolyl-L-lysyl-[protein] + 3 S-adenosyl-L-methionine = N-terminal N,N,N-trimethyl-L-alanyl-L-prolyl-L-lysyl-[protein] + 3 S-adenosyl-L-homocysteine + 3 H(+). It carries out the reaction N-terminal L-seryl-L-prolyl-L-lysyl-[protein] + 3 S-adenosyl-L-methionine = N-terminal N,N,N-trimethyl-L-seryl-L-prolyl-L-lysyl-[protein] + 3 S-adenosyl-L-homocysteine + 3 H(+). It catalyses the reaction N-terminal L-prolyl-L-prolyl-L-lysyl-[protein] + 2 S-adenosyl-L-methionine = N-terminal N,N-dimethyl-L-prolyl-L-prolyl-L-lysyl-[protein] + 2 S-adenosyl-L-homocysteine + 2 H(+). In terms of biological role, distributive alpha-N-methyltransferase that methylates the N-terminus of target proteins containing the N-terminal motif [Ala/Gly/Pro/Ser]-Pro-Lys when the initiator Met is cleaved. Specifically catalyzes mono-, di- or tri-methylation of the exposed alpha-amino group of the Ala, Gly or Ser residue in the [Ala/Gly/Ser]-Pro-Lys motif and mono- or di-methylation of Pro in the Pro-Pro-Lys motif. Some of the substrates may be primed by NTMT2-mediated monomethylation. Catalyzes the trimethylation of the N-terminal Gly in CENPA (after removal of Met-1). Responsible for the N-terminal methylation of KLHL31, MYL2, MYL3, RB1, RCC1, RPL23A and SET. Required during mitosis for normal bipolar spindle formation and chromosome segregation via its action on RCC1. In Ailuropoda melanoleuca (Giant panda), this protein is N-terminal Xaa-Pro-Lys N-methyltransferase 1 (NTMT1).